A 187-amino-acid chain; its full sequence is Ribonuclease HII (187 aa).

The RNase H type-2 domain maps to 1–187 (MIILGIDEAG…YKPVQVLLNE (187 aa)). The a divalent metal cation site is built by D7, E8, and D99.

This sequence belongs to the RNase HII family. Requires Mn(2+) as cofactor. The cofactor is Mg(2+).

It is found in the cytoplasm. It catalyses the reaction Endonucleolytic cleavage to 5'-phosphomonoester.. Its function is as follows. Endonuclease that specifically degrades the RNA of RNA-DNA hybrids. In Francisella tularensis subsp. mediasiatica (strain FSC147), this protein is Ribonuclease HII.